Here is a 282-residue protein sequence, read N- to C-terminus: Putative phosphatase MPN_383 (282 aa).

Asp11 serves as the catalytic Nucleophile. Mg(2+) is bound at residue Asp11. Leu12 is a binding site for phosphate. Asp13 contributes to the Mg(2+) binding site. Residues 45–46 and Lys207 each bind phosphate; that span reads TG. Asp230 provides a ligand contact to Mg(2+). Asn233 is a binding site for phosphate.

This sequence belongs to the HAD-like hydrolase superfamily. Cof family. Requires Mg(2+) as cofactor.

The polypeptide is Putative phosphatase MPN_383 (Mycoplasma pneumoniae (strain ATCC 29342 / M129 / Subtype 1) (Mycoplasmoides pneumoniae)).